A 314-amino-acid chain; its full sequence is tRNA uridine(34) hydroxylase (314 aa).

Residues 135 to 229 (ADPETLVIDT…YLEQIPAEES (95 aa)) form the Rhodanese domain. Catalysis depends on Cys-189, which acts as the Cysteine persulfide intermediate.

It belongs to the TrhO family.

It catalyses the reaction uridine(34) in tRNA + AH2 + O2 = 5-hydroxyuridine(34) in tRNA + A + H2O. Catalyzes oxygen-dependent 5-hydroxyuridine (ho5U) modification at position 34 in tRNAs. The polypeptide is tRNA uridine(34) hydroxylase (Sinorhizobium fredii (strain NBRC 101917 / NGR234)).